Here is a 208-residue protein sequence, read N- to C-terminus: Uracil phosphoribosyltransferase (208 aa).

Residues R78, R103, and 130–138 (DPMLATGGT) each bind 5-phospho-alpha-D-ribose 1-diphosphate. Residues I193 and 198-200 (GDA) each bind uracil. D199 lines the 5-phospho-alpha-D-ribose 1-diphosphate pocket.

It belongs to the UPRTase family. The cofactor is Mg(2+).

It catalyses the reaction UMP + diphosphate = 5-phospho-alpha-D-ribose 1-diphosphate + uracil. Its pathway is pyrimidine metabolism; UMP biosynthesis via salvage pathway; UMP from uracil: step 1/1. Allosterically activated by GTP. Functionally, catalyzes the conversion of uracil and 5-phospho-alpha-D-ribose 1-diphosphate (PRPP) to UMP and diphosphate. The chain is Uracil phosphoribosyltransferase from Blochmanniella floridana.